The sequence spans 142 residues: Large ribosomal subunit protein uL13 (142 aa).

Belongs to the universal ribosomal protein uL13 family. Part of the 50S ribosomal subunit.

This protein is one of the early assembly proteins of the 50S ribosomal subunit, although it is not seen to bind rRNA by itself. It is important during the early stages of 50S assembly. The polypeptide is Large ribosomal subunit protein uL13 (Proteus mirabilis (strain HI4320)).